A 531-amino-acid polypeptide reads, in one-letter code: MRSSLSRQTFSTKGGFSSNSASGGGGSRMRTSYSSVTMSRGSGGGGGVRSGSSSGGFGSRSLYNLGGKNISVSMACGASSGRALGGFGSGAYVGLGASRQTFGPVCPPGGIQEVTVNQSLLTPLNVEIDPEIQRVRTQEREQIKTLNNKFASFIDKVRFLEQQNKVLETKWALLQEQSQNTGVARSLEPFFENYLSTLRRQLDTKQSERGRLDMELRNVQDNLEDFKNKYEDEINKRTALENEFVLLKKDVDAAYMGRMDLHGKVDSLTQEIDFLQQLFEMELSQVQTNVSDTNVILSMDNNRNLDLDSIIAEVKAQYELIAQKSRAEAESWYQTKYEELQVTAGKHGDSLRDTKNEIAELTRTTQRLQGEVDAAKKQCQQLQTAIAEAEQNGEMALKDAKKKLGDLDTALHQAKEDLARMLREYQDLVSVKLALDMEIATYRKLLESEESRMSGDCPSAISISVTGNSTSVCAGGTAGFGNGLSLGGAGGASKGGFGSSVSYGAAKGGQVSGGTSILRKTTTVKTSSRRY.

The span at 1 to 12 shows a compositional bias: polar residues; that stretch reads MRSSLSRQTFST. Residues 1–55 are disordered; the sequence is MRSSLSRQTFSTKGGFSSNSASGGGGSRMRTSYSSVTMSRGSGGGGGVRSGSSSG. Residues 1–138 form a head region; that stretch reads MRSSLSRQTF…DPEIQRVRTQ (138 aa). Low complexity predominate over residues 28 to 40; that stretch reads RMRTSYSSVTMSR. Gly residues predominate over residues 41–55; sequence GSGGGGGVRSGSSSG. The interval 139–174 is coil 1A; that stretch reads EREQIKTLNNKFASFIDKVRFLEQQNKVLETKWALL. One can recognise an IF rod domain in the interval 139 to 453; that stretch reads EREQIKTLNN…KLLESEESRM (315 aa). Positions 175–194 are linker 1; the sequence is QEQSQNTGVARSLEPFFENY. The segment at 195–286 is coil 1B; the sequence is LSTLRRQLDT…QLFEMELSQV (92 aa). The tract at residues 287–310 is linker 12; the sequence is QTNVSDTNVILSMDNNRNLDLDSI. Residues 311–449 are coil 2; the sequence is IAEVKAQYEL…ATYRKLLESE (139 aa). Positions 450-531 are tail; the sequence is ESRMSGDCPS…TTVKTSSRRY (82 aa).

Belongs to the intermediate filament family. As to quaternary structure, heterotetramer of two type I and two type II keratins.

This Mus musculus (Mouse) protein is Keratin, type II cytoskeletal 79 (Krt79).